The sequence spans 281 residues: MQPPSFSTSEDTVQPVSAASPIASDDASSAFVVAVPARYASTRLPGKPLQLIGDRPMIQHVADRALAAGAREVWVATDDARIAEAIQGLAGVRVAMTSSVHLSGTDRLAECARIAGWDAATCVVNLQGDEPFAPAAGIRAVAQVLQRSGAEMATLAAPVDSAHDLFDPNVVKLVRNAHGDALYFSRAPIPWHRDSFAGQRDAVPAGNHWLRHIGIYAYRAGFLQQFAAMPPGTLERIESLEQLRVLEAGYRIAVALTPEQFPPGIDTPEDLQRAQAQLASA.

This sequence belongs to the KdsB family.

It is found in the cytoplasm. It catalyses the reaction 3-deoxy-alpha-D-manno-oct-2-ulosonate + CTP = CMP-3-deoxy-beta-D-manno-octulosonate + diphosphate. The protein operates within nucleotide-sugar biosynthesis; CMP-3-deoxy-D-manno-octulosonate biosynthesis; CMP-3-deoxy-D-manno-octulosonate from 3-deoxy-D-manno-octulosonate and CTP: step 1/1. It participates in bacterial outer membrane biogenesis; lipopolysaccharide biosynthesis. Functionally, activates KDO (a required 8-carbon sugar) for incorporation into bacterial lipopolysaccharide in Gram-negative bacteria. The protein is 3-deoxy-manno-octulosonate cytidylyltransferase of Xanthomonas campestris pv. campestris (strain B100).